The primary structure comprises 351 residues: Divinyl chlorophyll a/b light-harvesting protein PcbC (351 aa).

The next 6 helical transmembrane spans lie at 27–47 (FIGS…GSTL), 81–101 (GVWT…FSAV), 140–160 (FILG…VEWA), 202–222 (VMSG…WHIA), 242–262 (AVLS…AFWC), and 309–329 (LSNV…WHAL).

Belongs to the PsbB/PsbC family. IsiA/Pcb subfamily. As to quaternary structure, the antenna complex consists of divinyl chlorophylls (a and b) and divinyl chlorophyll a/b binding proteins and binds more divinyl chlorophyll b than does the antenna complex from high-light-adapted Prochlorococcus. The cofactor is divinyl chlorophyll a. Divinyl chlorophyll b is required as a cofactor.

It is found in the cellular thylakoid membrane. In terms of biological role, the antenna complex functions as a light receptor, it captures and delivers excitation energy to photosystems II and I. The Prochlorales pcb genes are not related to higher plant LHCs. In Prochlorococcus marinus (strain NATL2A), this protein is Divinyl chlorophyll a/b light-harvesting protein PcbC (pcbC).